The chain runs to 916 residues: Protein translocase subunit SecA (916 aa).

Residues Gln87, 105-109 (GEGKT), and Asp512 each bind ATP. A disordered region spans residues 857–916 (QHAEAPSMEQAVAGEEEELPEGPAPVVPLEPVRNEQKIGRNEPCPCGSGKKYKHCHGQLD). The Zn(2+) site is built by Cys900, Cys902, Cys911, and His912. Residues 906–916 (KKYKHCHGQLD) show a composition bias toward basic residues.

Belongs to the SecA family. Monomer and homodimer. Part of the essential Sec protein translocation apparatus which comprises SecA, SecYEG and auxiliary proteins SecDF-YajC and YidC. Zn(2+) serves as cofactor.

The protein localises to the cell inner membrane. It localises to the cytoplasm. It carries out the reaction ATP + H2O + cellular proteinSide 1 = ADP + phosphate + cellular proteinSide 2.. Part of the Sec protein translocase complex. Interacts with the SecYEG preprotein conducting channel. Has a central role in coupling the hydrolysis of ATP to the transfer of proteins into and across the cell membrane, serving both as a receptor for the preprotein-SecB complex and as an ATP-driven molecular motor driving the stepwise translocation of polypeptide chains across the membrane. This chain is Protein translocase subunit SecA, found in Pseudomonas aeruginosa (strain UCBPP-PA14).